A 466-amino-acid polypeptide reads, in one-letter code: IQ domain-containing protein C (466 aa).

The IQ domain maps to 6-35 (LVRKVSALQACVRGFLVRRQFQSLRAEYEA). Disordered regions lie at residues 105 to 157 (KSGE…PHSQ), 214 to 233 (EQAC…DQSY), 238 to 310 (TGEL…QTFG), and 394 to 466 (VLDL…EPPG). The segment covering 132–153 (PSQEKTRDTTRMENPEATDQRL) has biased composition (basic and acidic residues). Residues 282-293 (GPPSSIPSNSQA) are compositionally biased toward polar residues. Basic and acidic residues predominate over residues 297–306 (RLTKGPDDGR). S438 bears the Phosphoserine mark.

The chain is IQ domain-containing protein C (IQCC) from Homo sapiens (Human).